A 250-amino-acid chain; its full sequence is Proteasome subunit alpha (250 aa).

This sequence belongs to the peptidase T1A family. In terms of assembly, the 20S proteasome core is composed of 14 alpha and 14 beta subunits that assemble into four stacked heptameric rings, resulting in a barrel-shaped structure. The two inner rings, each composed of seven catalytic beta subunits, are sandwiched by two outer rings, each composed of seven alpha subunits. The catalytic chamber with the active sites is on the inside of the barrel. Has a gated structure, the ends of the cylinder being occluded by the N-termini of the alpha-subunits. Is capped at one or both ends by the proteasome regulatory ATPase, PAN.

It is found in the cytoplasm. With respect to regulation, the formation of the proteasomal ATPase PAN-20S proteasome complex, via the docking of the C-termini of PAN into the intersubunit pockets in the alpha-rings, triggers opening of the gate for substrate entry. Interconversion between the open-gate and close-gate conformations leads to a dynamic regulation of the 20S proteasome proteolysis activity. In terms of biological role, component of the proteasome core, a large protease complex with broad specificity involved in protein degradation. The sequence is that of Proteasome subunit alpha from Haloquadratum walsbyi (strain DSM 16790 / HBSQ001).